A 658-amino-acid chain; its full sequence is Threonine--tRNA ligase (658 aa).

Residues 1–61 (MIELVFPDGS…EKGGAFKILT (61 aa)) form the TGS domain. The tract at residues 243-535 (DHRKLGRQMD…LIENYAGAFP (293 aa)) is catalytic. Residues Cys335, His386, and His512 each contribute to the Zn(2+) site.

This sequence belongs to the class-II aminoacyl-tRNA synthetase family. As to quaternary structure, homodimer. Zn(2+) serves as cofactor.

The protein localises to the cytoplasm. It carries out the reaction tRNA(Thr) + L-threonine + ATP = L-threonyl-tRNA(Thr) + AMP + diphosphate + H(+). Its function is as follows. Catalyzes the attachment of threonine to tRNA(Thr) in a two-step reaction: L-threonine is first activated by ATP to form Thr-AMP and then transferred to the acceptor end of tRNA(Thr). Also edits incorrectly charged L-seryl-tRNA(Thr). The protein is Threonine--tRNA ligase of Phenylobacterium zucineum (strain HLK1).